Here is a 377-residue protein sequence, read N- to C-terminus: Multiple sugar-binding transport ATP-binding protein MsmK (377 aa).

One can recognise an ABC transporter domain in the interval 4–246 (LNLNHIYKKY…PANKFVAGFI (243 aa)). 38–45 (GPSGCGKS) provides a ligand contact to ATP.

It belongs to the ABC transporter superfamily.

Its subcellular location is the cell membrane. Its function is as follows. Involved in a binding protein-dependent transport system responsible for the uptake of melibiose, raffinose and isomaltotriose. Probably responsible for energy coupling to the transport system. This chain is Multiple sugar-binding transport ATP-binding protein MsmK (msmK), found in Streptococcus mutans serotype c (strain ATCC 700610 / UA159).